The primary structure comprises 199 residues: Recombination protein RecR (199 aa).

Residues 57-72 form a C4-type zinc finger; it reads CPICGNITEKEVCDIC. The region spanning 80 to 176 is the Toprim domain; it reads TTIMVVEQPK…KVTRLAAGLS (97 aa).

Belongs to the RecR family.

In terms of biological role, may play a role in DNA repair. It seems to be involved in an RecBC-independent recombinational process of DNA repair. It may act with RecF and RecO. The sequence is that of Recombination protein RecR from Lactobacillus helveticus (strain DPC 4571).